The following is a 395-amino-acid chain: Phosphoprotein (395 aa).

Residues 178 to 217 form a disordered region; the sequence is NGVLHGSEIRSKSSSGVIPGVPQSRPQLASSPAHADPAPA. The span at 206 to 217 shows a compositional bias: low complexity; the sequence is ASSPAHADPAPA. The segment at 220 to 283 is multimerization; the sequence is ENVKEIIELL…ITTIKIMDPS (64 aa).

It belongs to the rubulavirus/avulavirus P protein family. As to quaternary structure, homotetramer. Interacts (via multimerization domain) with polymerase L; this interaction forms the polymerase L-P complex. Interacts (via N-terminus) with N0 (via Ncore); this interaction allows P to chaperon N0 to avoid N polymerization before encapsidation. Interacts (via C-terminus) with N-RNA template; this interaction positions the polymerase on the template for both transcription and replication. Interacts with host ARHGAP26; this interaction promotes host RHOA activation. Interacts with host KPNA1 and KPNA6.

The protein localises to the host cytoplasm. In terms of biological role, essential cofactor of the RNA polymerase L that plays a central role in the transcription and replication by forming the polymerase complex with RNA polymerase L and recruiting L to the genomic N-RNA template for RNA synthesis. Also plays a central role in the encapsidation of nascent RNA chains by forming the encapsidation complex with the nucleocapsid protein N (N-P complex). Acts as a chaperone for newly synthesized free N protein, so-called N0, allowing encapsidation of nascent RNA chains during replication. The nucleoprotein protein N prevents excessive phosphorylation of P, which leads to down-regulation of viral transcription/ replication. Participates, together with N, in the formation of viral factories (viroplasms), which are large inclusions in the host cytoplasm where replication takes place. Also plays a role in viral growth by promoting host RHOA activation and thus actin formation via ARHGAP26 inhibition. The polypeptide is Phosphoprotein (P/V) (Homo sapiens (Human)).